A 272-amino-acid chain; its full sequence is MAVYAVGDLQGCLQPLKCLLEQVAFDPAQDQLWLVGDLVNRGPQSLETLRFLYSIRHALTCVLGNHDLHLLAVAHNIERLKKGDTLREILDAPDRDDLLDWLRLQKLVHHDAERQITLVHAGIPPQWSLAKALKRAAEVEEVLRDDARLPLFLDGMYGNEPAKWNKDLHGVTRLRVITNYFTRMRFCTADGTLDLKSKEGVGSAPPGFAPWFSHPQRKMRGEKIIFGHWAALDGNCQEPGLYALDTGCVWGGAMTLLNVDSGALHRCTCPKQ.

Belongs to the Ap4A hydrolase family.

It catalyses the reaction P(1),P(4)-bis(5'-adenosyl) tetraphosphate + H2O = 2 ADP + 2 H(+). Hydrolyzes diadenosine 5',5'''-P1,P4-tetraphosphate to yield ADP. The polypeptide is Bis(5'-nucleosyl)-tetraphosphatase, symmetrical (Ectopseudomonas mendocina (strain ymp) (Pseudomonas mendocina)).